Consider the following 162-residue polypeptide: MKLNEIRDNEGATKNRMRVGRGIGSGKGKTAGRGVKGQKARTGVAIKGFEGGQMPLHRRLPKRGFTNPGATDLNEVNIGRIQQAVDAGKLDPSAPVTVEALLAAGIVSRVRDGVKILGVGELSAKLTFQVARASKSAVAAIEKAGGSVTQSLAATDGAVASA.

Residues 1–13 (MKLNEIRDNEGAT) are compositionally biased toward basic and acidic residues. Residues 1 to 37 (MKLNEIRDNEGATKNRMRVGRGIGSGKGKTAGRGVKG) form a disordered region. Over residues 21 to 35 (RGIGSGKGKTAGRGV) the composition is skewed to gly residues.

Belongs to the universal ribosomal protein uL15 family. In terms of assembly, part of the 50S ribosomal subunit.

Binds to the 23S rRNA. The chain is Large ribosomal subunit protein uL15 from Methylobacterium nodulans (strain LMG 21967 / CNCM I-2342 / ORS 2060).